The sequence spans 376 residues: UPF0754 membrane protein BH1148 (376 aa).

A run of 2 helical transmembrane segments spans residues 3-23 and 355-375; these read LILF…SLAI and YLGA…ILLI.

The protein belongs to the UPF0754 family.

Its subcellular location is the cell membrane. This Halalkalibacterium halodurans (strain ATCC BAA-125 / DSM 18197 / FERM 7344 / JCM 9153 / C-125) (Bacillus halodurans) protein is UPF0754 membrane protein BH1148.